The chain runs to 376 residues: Pregnancy-associated glycoprotein 2 (376 aa).

Residues 1–15 (MKWLVLLGLVALSEC) form the signal peptide. 2 N-linked (GlcNAc...) asparagine glycosylation sites follow: asparagine 51 and asparagine 71. Residues 68–373 (YVGNITIGTP…DRKNRRIGLA (306 aa)) enclose the Peptidase A1 domain. Aspartate 86 is an active-site residue. Cysteine 99 and cysteine 104 are joined by a disulfide. N-linked (GlcNAc...) asparagine glycosylation is found at asparagine 114, asparagine 248, and asparagine 252. A disulfide bond links cysteine 258 and cysteine 262. The active site involves aspartate 267. Cysteine 300 and cysteine 333 are joined by a disulfide. The N-linked (GlcNAc...) asparagine glycan is linked to asparagine 343.

This sequence belongs to the peptidase A1 family. Post-translationally, N-Glycosylated; the glycans terminate in either N-acetyl-galactosamine (GalNAc) or N-acetyllactosamine. Terminal GalNAc on Asn-linked glycans is greatly reduced prior to parturition while lactosamine-type N-glycans remain unaltered. As to expression, trophoblast and placental tissue. Localized to both the mononucleate and binucleate cells of the trophectoderm.

It localises to the secreted. The protein resides in the extracellular space. PAG2 or a processed derivative of this molecule might represent a factor that binds the LH receptor. The protein is Pregnancy-associated glycoprotein 2 (PAG2) of Bos taurus (Bovine).